The chain runs to 135 residues: Nucleoside diphosphate kinase (135 aa).

ATP-binding residues include K9, Y57, R85, T91, R102, and N112. The active-site Pros-phosphohistidine intermediate is the H115.

This sequence belongs to the NDK family. Homotetramer. Requires Mg(2+) as cofactor.

It is found in the cytoplasm. It carries out the reaction a 2'-deoxyribonucleoside 5'-diphosphate + ATP = a 2'-deoxyribonucleoside 5'-triphosphate + ADP. The catalysed reaction is a ribonucleoside 5'-diphosphate + ATP = a ribonucleoside 5'-triphosphate + ADP. Functionally, major role in the synthesis of nucleoside triphosphates other than ATP. The ATP gamma phosphate is transferred to the NDP beta phosphate via a ping-pong mechanism, using a phosphorylated active-site intermediate. This chain is Nucleoside diphosphate kinase, found in Thermoanaerobacter pseudethanolicus (strain ATCC 33223 / 39E) (Clostridium thermohydrosulfuricum).